The sequence spans 253 residues: Imidazole glycerol phosphate synthase subunit HisF (253 aa).

Residues aspartate 11 and aspartate 130 contribute to the active site.

It belongs to the HisA/HisF family. Heterodimer of HisH and HisF.

Its subcellular location is the cytoplasm. The catalysed reaction is 5-[(5-phospho-1-deoxy-D-ribulos-1-ylimino)methylamino]-1-(5-phospho-beta-D-ribosyl)imidazole-4-carboxamide + L-glutamine = D-erythro-1-(imidazol-4-yl)glycerol 3-phosphate + 5-amino-1-(5-phospho-beta-D-ribosyl)imidazole-4-carboxamide + L-glutamate + H(+). The protein operates within amino-acid biosynthesis; L-histidine biosynthesis; L-histidine from 5-phospho-alpha-D-ribose 1-diphosphate: step 5/9. Its function is as follows. IGPS catalyzes the conversion of PRFAR and glutamine to IGP, AICAR and glutamate. The HisF subunit catalyzes the cyclization activity that produces IGP and AICAR from PRFAR using the ammonia provided by the HisH subunit. This chain is Imidazole glycerol phosphate synthase subunit HisF, found in Clostridium botulinum (strain Langeland / NCTC 10281 / Type F).